Reading from the N-terminus, the 757-residue chain is Glutathione biosynthesis bifunctional protein GshAB (757 aa).

A glutamate--cysteine ligase region spans residues 1–337; the sequence is MNIQQIVKEK…LGRARLGEVA (337 aa). Positions 494-757 constitute an ATP-grasp domain; the sequence is KKVLAKAGFN…VLGMLFPELV (264 aa). Position 521–580 (521–580) interacts with ATP; it reads PLFEGKAVVIKPKSTNFGLGISIFQQGVHDKADFAKAVEIAFREDKEVMVEDYLVGTEYR. 3 residues coordinate Mg(2+): Asp-702, Glu-723, and Asn-725. Mn(2+)-binding residues include Asp-702, Glu-723, and Asn-725.

The protein in the N-terminal section; belongs to the glutamate--cysteine ligase type 1 family. Type 2 subfamily. In terms of assembly, monomer. Requires Mg(2+) as cofactor. The cofactor is Mn(2+).

The catalysed reaction is L-cysteine + L-glutamate + ATP = gamma-L-glutamyl-L-cysteine + ADP + phosphate + H(+). It carries out the reaction gamma-L-glutamyl-L-cysteine + glycine + ATP = glutathione + ADP + phosphate + H(+). The protein operates within sulfur metabolism; glutathione biosynthesis; glutathione from L-cysteine and L-glutamate: step 1/2. It participates in sulfur metabolism; glutathione biosynthesis; glutathione from L-cysteine and L-glutamate: step 2/2. Its function is as follows. Synthesizes glutathione from L-glutamate and L-cysteine via gamma-L-glutamyl-L-cysteine. This is Glutathione biosynthesis bifunctional protein GshAB from Mannheimia succiniciproducens (strain KCTC 0769BP / MBEL55E).